We begin with the raw amino-acid sequence, 347 residues long: 4-hydroxy-2-oxovalerate aldolase (347 aa).

The Pyruvate carboxyltransferase domain occupies 11–262 (PVVVDTTLRD…NPGLDVFKLL (252 aa)). 19–20 (RD) contributes to the substrate binding site. Mn(2+) is bound at residue Asp20. Residue His23 is the Proton acceptor of the active site. Positions 173 and 201 each coordinate substrate. Mn(2+) is bound by residues His201 and His203. Tyr292 lines the substrate pocket.

This sequence belongs to the 4-hydroxy-2-oxovalerate aldolase family. Homodimer. Can also form a heterotetramer composed of two aldolase (TTHB246) and two dehydrogenase (TTHB247) subunits. Upon complex formation, the aldolase shows a 5-fold increase in substrate affinity, while the dehydrogenase shows a 3-fold decrease; the kcat values of each enzyme are reduced by 2-fold when they are in a complex. The cofactor is Co(2+). Ni(2+) serves as cofactor. Mn(2+) is required as a cofactor.

The catalysed reaction is (S)-4-hydroxy-2-oxopentanoate = acetaldehyde + pyruvate. It catalyses the reaction (S)-4-hydroxy-2-oxohexanoate = propanal + pyruvate. With respect to regulation, appears to be allosterically activated by NADH. Catalyzes the retro-aldol cleavage of both 4-hydroxy-2-oxopentanoate (HOPA) and 4-hydroxy-2-oxohexanoate (HOHA) to pyruvate and acetaldehyde or propanaldehyde, respectively. The aldehydes produced by this reaction are directly channeled to the dehydrogenase TTHB247, ensuring that these toxic aldehydes are sequestered from cellular components. Is involved in the meta-cleavage pathway for the degradation of aromatic compounds. Appears to be stereospecific since it can cleave (4S)-4-hydroxy-2-oxopentanoate but not the (4R) isomer. Is not able to catalyze the aldol addition of 2-oxobutyrate with acetaldehyde; this indicates that the enzyme is specific for pyruvate as the carbonyl donor. The chain is 4-hydroxy-2-oxovalerate aldolase from Thermus thermophilus (strain ATCC 27634 / DSM 579 / HB8).